A 369-amino-acid polypeptide reads, in one-letter code: Choline-phosphate cytidylyltransferase B (369 aa).

Residues 1-27 are disordered; that stretch reads MPVLTTDAESETGIPKSLSNEPPSETM. CTP-binding residues include I84, F85, H92, and K122. The phosphocholine site is built by K122 and W151. CTP-binding residues include H168, D169, Y173, Q195, R196, T197, and I200. The tract at residues 309 to 369 is disordered; it reads RMLQALSPKQ…SMSEGDEDEK (61 aa). 7 positions are modified to phosphoserine: S315, S319, S322, S323, S329, S331, and S335. Residues 319–339 are compositionally biased toward low complexity; it reads SPVSSPTRSRSPSRSPSPTFS. T345 is modified (phosphothreonine). Residues S346, S349, S350, S355, S360, and S362 each carry the phosphoserine modification. Residues 351–362 are compositionally biased toward low complexity; the sequence is PKAASASISSMS.

It belongs to the cytidylyltransferase family. As to quaternary structure, homodimer. Highly expressed in brain (at protein level). Expressed in liver (at protein level). Expressed at lower levels in lung and gonads. As to expression, expressed in brain (at protein level). Expressed at lower levels in lung and gonads.

It localises to the endoplasmic reticulum. The protein resides in the cytoplasm. It catalyses the reaction phosphocholine + CTP + H(+) = CDP-choline + diphosphate. Its pathway is phospholipid metabolism; phosphatidylcholine biosynthesis; phosphatidylcholine from phosphocholine: step 1/2. In terms of biological role, catalyzes the key rate-limiting step in the CDP-choline pathway for phosphatidylcholine biosynthesis. Plays an important role in ovary maturation and the maintenance of sperm production. Catalyzes the key rate-limiting step in the CDP-choline pathway for phosphatidylcholine biosynthesis. The chain is Choline-phosphate cytidylyltransferase B (Pcyt1b) from Mus musculus (Mouse).